Reading from the N-terminus, the 275-residue chain is 3-methyl-2-oxobutanoate hydroxymethyltransferase (275 aa).

D49 and D88 together coordinate Mg(2+). Residues 49 to 50 (DS), D88, and K118 contribute to the 3-methyl-2-oxobutanoate site. E120 is a binding site for Mg(2+). E187 functions as the Proton acceptor in the catalytic mechanism.

This sequence belongs to the PanB family. As to quaternary structure, homodecamer; pentamer of dimers. The cofactor is Mg(2+).

It is found in the cytoplasm. The catalysed reaction is 3-methyl-2-oxobutanoate + (6R)-5,10-methylene-5,6,7,8-tetrahydrofolate + H2O = 2-dehydropantoate + (6S)-5,6,7,8-tetrahydrofolate. It functions in the pathway cofactor biosynthesis; (R)-pantothenate biosynthesis; (R)-pantoate from 3-methyl-2-oxobutanoate: step 1/2. Catalyzes the reversible reaction in which hydroxymethyl group from 5,10-methylenetetrahydrofolate is transferred onto alpha-ketoisovalerate to form ketopantoate. This chain is 3-methyl-2-oxobutanoate hydroxymethyltransferase, found in Brucella melitensis biotype 1 (strain ATCC 23456 / CCUG 17765 / NCTC 10094 / 16M).